The sequence spans 115 residues: Large ribosomal subunit protein bL19 (115 aa).

This sequence belongs to the bacterial ribosomal protein bL19 family.

This protein is located at the 30S-50S ribosomal subunit interface and may play a role in the structure and function of the aminoacyl-tRNA binding site. This Lacticaseibacillus casei (strain BL23) (Lactobacillus casei) protein is Large ribosomal subunit protein bL19.